We begin with the raw amino-acid sequence, 250 residues long: 7-cyano-7-deazaguanine synthase (250 aa).

28–38 is a binding site for ATP; that stretch reads LSGGLDSATCV. Zn(2+) is bound by residues cysteine 213, cysteine 226, cysteine 229, and cysteine 232.

Belongs to the QueC family. Requires Zn(2+) as cofactor.

The catalysed reaction is 7-carboxy-7-deazaguanine + NH4(+) + ATP = 7-cyano-7-deazaguanine + ADP + phosphate + H2O + H(+). It functions in the pathway purine metabolism; 7-cyano-7-deazaguanine biosynthesis. Functionally, catalyzes the ATP-dependent conversion of 7-carboxy-7-deazaguanine (CDG) to 7-cyano-7-deazaguanine (preQ(0)). The polypeptide is 7-cyano-7-deazaguanine synthase (Rhodopirellula baltica (strain DSM 10527 / NCIMB 13988 / SH1)).